The chain runs to 434 residues: Tryptophan dimethylallyltransferase nptA (434 aa).

L-tryptophan contacts are provided by residues 91-92 (SL) and E100. 3 residues coordinate substrate: R115, K202, and Y204. Y206 serves as a coordination point for L-tryptophan. Substrate is bound by residues R271, K273, Y275, Y358, Y423, and Y427.

This sequence belongs to the tryptophan dimethylallyltransferase family. As to quaternary structure, homodimer.

The catalysed reaction is L-tryptophan + dimethylallyl diphosphate = 4-(3-methylbut-2-enyl)-L-tryptophan + diphosphate. Its pathway is secondary metabolite biosynthesis. Its function is as follows. Nonribosomal peptide synthase involved in the synthesis of nidulanin A and derived compounds. Nidulanin A is a tetracyclopeptide with the sequence L-Phe-L-Kyn-L-Val-D-Val and an isoprene unit N-linked to the amino group of L-kynurenine. The NRPS nlsA is responsible of the synthesis of the cyclopeptide and the prenyltransferase nptA adds the isoprene unit on the L-kynurenine residue of nidulanin A. Further modifications lead to additional oxygenated related compounds. The polypeptide is Tryptophan dimethylallyltransferase nptA (Emericella nidulans (strain FGSC A4 / ATCC 38163 / CBS 112.46 / NRRL 194 / M139) (Aspergillus nidulans)).